A 191-amino-acid polypeptide reads, in one-letter code: MYTARKKIQKDKGVEPSEFEDTVAQAFFDLENGNQELKSDLKDLYINTAIQMDVVGNRKAVVIHVPYRLRKPFRKIHVRLVRELERVSGKDVVFVATRRIVRPPKKGSAVQRPRTRTLTAVHDGILEDVVYPAEIVGKRVRYRLDGAKVIKIYLDPKERNNTEYKLETFSAVYRRLCGKDVVFEYPVAETA.

Belongs to the eukaryotic ribosomal protein eS7 family.

This chain is Small ribosomal subunit protein eS7 (RPS7), found in Hordeum vulgare (Barley).